The following is a 973-amino-acid chain: GATOR2 complex protein WDR59 (973 aa).

WD repeat units lie at residues 57 to 98 (QSKW…GEVC), 103 to 143 (GHTR…KPTV), 146 to 185 (SAVAGASQVKWNKKNANCLATSHDGDVRIWDKRKPSTAVE), 189 to 229 (AHLS…KYLN), 232 to 276 (PCQV…TPVH), and 280 to 324 (GHDD…QRLC). A disordered region spans residues 346-365 (DKALQPQDSEPQHSSGHGDE). The segment covering 351 to 360 (PQDSEPQHSS) has biased composition (polar residues). One can recognise an RWD domain in the interval 393-494 (QEFSLINVQI…RQLVSWLESV (102 aa)). A C4-type zinc finger spans residues 900–920 (YCSHCRSEARGTQCAICKGFT). 13 residues coordinate Zn(2+): Cys-901, Cys-904, Cys-913, Cys-916, Cys-926, Cys-937, His-942, His-945, His-948, Cys-959, Cys-963, Cys-965, and Cys-967. An RING-type; atypical zinc finger spans residues 921 to 970 (FQCAICHVAVRGSSNFCLTCGHGGHTSHMMEWFRTQEVCPTGCGCHCLLE).

Belongs to the WD repeat WDR59 family. In terms of assembly, component of the GATOR2 subcomplex, composed of MIOS, SEC13, SEH1L, WDR24 and WDR59. The GATOR2 complex interacts with CASTOR1 and CASTOR2; the interaction is negatively regulated by arginine. The GATOR2 complex interacts with SESN1, SESN2 and SESN3; the interaction is negatively regulated by amino acids. Interacts with DDB1-CUL4A/B E3 ligase complexes.

It is found in the lysosome membrane. Its activity is regulated as follows. The GATOR2 complex is negatively regulated by the upstream amino acid sensors CASTOR1 and SESN2, which sequester the GATOR2 complex in absence of amino acids. In the presence of abundant amino acids, GATOR2 is released from CASTOR1 and SESN2 and activated. Its function is as follows. As a component of the GATOR2 complex, functions as an activator of the amino acid-sensing branch of the mTORC1 signaling pathway. The GATOR2 complex indirectly activates mTORC1 through the inhibition of the GATOR1 subcomplex. GATOR2 probably acts as an E3 ubiquitin-protein ligase toward GATOR1. In the presence of abundant amino acids, the GATOR2 complex mediates ubiquitination of the NPRL2 core component of the GATOR1 complex, leading to GATOR1 inactivation. In the absence of amino acids, GATOR2 is inhibited, activating the GATOR1 complex. In Gallus gallus (Chicken), this protein is GATOR2 complex protein WDR59.